Consider the following 164-residue polypeptide: Transcriptional regulator MraZ (164 aa).

SpoVT-AbrB domains follow at residues 7 to 57 and 86 to 129; these read THQN…TVGA and AYPL…NPEA. The interval 133–164 is disordered; it reads RRQAARSRARTLATSRRPASAPAAGNTAGAAE. A compositionally biased stretch (low complexity) spans 142-164; that stretch reads RTLATSRRPASAPAAGNTAGAAE.

The protein belongs to the MraZ family. Forms oligomers.

Its subcellular location is the cytoplasm. It localises to the nucleoid. This chain is Transcriptional regulator MraZ, found in Gluconobacter oxydans (strain 621H) (Gluconobacter suboxydans).